The chain runs to 737 residues: Polyribonucleotide nucleotidyltransferase (737 aa).

Asp-489 and Asp-495 together coordinate Mg(2+). In terms of domain architecture, KH spans 556–615 (PKIDTIKIDVDKIKIVIGKGGETIDKIIAETGVKIDIDEEGNVSIYSSDQDAINRAKEII). The S1 motif domain maps to 625–693 (DEVYRAKVVR…EKGRVDASMK (69 aa)). The interval 691–737 (SMKALLPRPPKPERDEKGEKSERPYRPRHHKDHKPKKEITETPKDSE) is disordered. Composition is skewed to basic and acidic residues over residues 700-715 (PKPE…ERPY) and 725-737 (PKKE…KDSE).

Belongs to the polyribonucleotide nucleotidyltransferase family. It depends on Mg(2+) as a cofactor.

Its subcellular location is the cytoplasm. The catalysed reaction is RNA(n+1) + phosphate = RNA(n) + a ribonucleoside 5'-diphosphate. Functionally, involved in mRNA degradation. Catalyzes the phosphorolysis of single-stranded polyribonucleotides processively in the 3'- to 5'-direction. This Streptococcus pneumoniae (strain Hungary19A-6) protein is Polyribonucleotide nucleotidyltransferase.